The primary structure comprises 465 residues: Ribulose bisphosphate carboxylase large chain (465 aa).

K4 carries the post-translational modification N6,N6,N6-trimethyllysine. N113 and T163 together coordinate substrate. The Proton acceptor role is filled by K165. K167 contributes to the substrate binding site. Mg(2+) contacts are provided by K191, D193, and E194. K191 carries the post-translational modification N6-carboxylysine. The Proton acceptor role is filled by H284. Substrate-binding residues include R285, H317, and S369.

Belongs to the RuBisCO large chain family. Type I subfamily. Heterohexadecamer of 8 large chains and 8 small chains; disulfide-linked. The disulfide link is formed within the large subunit homodimers. Mg(2+) is required as a cofactor. Post-translationally, the disulfide bond which can form in the large chain dimeric partners within the hexadecamer appears to be associated with oxidative stress and protein turnover.

The protein localises to the plastid. It is found in the chloroplast. It catalyses the reaction 2 (2R)-3-phosphoglycerate + 2 H(+) = D-ribulose 1,5-bisphosphate + CO2 + H2O. The enzyme catalyses D-ribulose 1,5-bisphosphate + O2 = 2-phosphoglycolate + (2R)-3-phosphoglycerate + 2 H(+). In terms of biological role, ruBisCO catalyzes two reactions: the carboxylation of D-ribulose 1,5-bisphosphate, the primary event in carbon dioxide fixation, as well as the oxidative fragmentation of the pentose substrate in the photorespiration process. Both reactions occur simultaneously and in competition at the same active site. This Combretum indicum (Rangoon creeper) protein is Ribulose bisphosphate carboxylase large chain.